A 414-amino-acid polypeptide reads, in one-letter code: Carbohydrate sulfotransferase 12 (414 aa).

The Cytoplasmic segment spans residues 1 to 5 (MTKAR). Residues 6 to 26 (LFRLWLVLGSVFMILLIIVYW) traverse the membrane as a helical; Signal-anchor for type II membrane protein segment. Residues 27-414 (DSAGAAHFYL…YPKPENLLRD (388 aa)) are Lumenal-facing. Residues 80–125 (QSDLPRKETEQPPAPGSMEESVRGYDWSPRDARRSPDQGRQQAERR) are disordered. Over residues 99–125 (ESVRGYDWSPRDARRSPDQGRQQAERR) the composition is skewed to basic and acidic residues. Residue asparagine 134 is glycosylated (N-linked (GlcNAc...) asparagine). 171–177 (PKVACTN) is a 3'-phosphoadenylyl sulfate binding site. The N-linked (GlcNAc...) asparagine glycan is linked to asparagine 209. Residue 245-253 (RDPFVRLIS) coordinates 3'-phosphoadenylyl sulfate. N-linked (GlcNAc...) asparagine glycans are attached at residues asparagine 280 and asparagine 370.

It belongs to the sulfotransferase 2 family. Widely expressed. Expressed a high level in spinal chord, heart, spleen, thyroid, pituitary gland, adrenal gland, peripheral blood leukocytes, thymus, lung, small intestine, fetal kidney, fetal spleen and fetal lung.

It is found in the golgi apparatus membrane. It catalyses the reaction chondroitin beta-D-glucuronate + n 3'-phosphoadenylyl sulfate = chondroitin 4'-sulfate + n adenosine 3',5'-bisphosphate + n H(+). Its function is as follows. Catalyzes the transfer of sulfate to position 4 of the N-acetylgalactosamine (GalNAc) residue of chondroitin and desulfated dermatan sulfate. Chondroitin sulfate constitutes the predominant proteoglycan present in cartilage and is distributed on the surfaces of many cells and extracellular matrices. Activity toward partially desulfated dermatan sulfate is however lower. Does not form 4, 6-di-O-sulfated GalNAc when chondroitin sulfate C is used as an acceptor. This is Carbohydrate sulfotransferase 12 (CHST12) from Homo sapiens (Human).